Consider the following 399-residue polypeptide: MSKWDSNIPFLFFSNKKITMIKECQNPPHFRVVTDNTALLEVCNLAQQKSAVALDTEFMRVSTYFPKLGLIQLYDGEHVSLIDPLAITDFSPFVALLANPKVLKILHSCSEDLLVFLQEFDQLPRPMIDTQIMARFLGLGTSAGLAKLAQQYLNVEIDKGATRTNWIKRPLSDIQLQYAAGDVWYLLPLYHILEKELAKTPWEQAVRDDCELVLAKTHKLQERDSEKAYLDIPNAWKLNPLELSRLRVLAQWRQNVAIERDLALSYIVKSEHLWKVAKNNPRNTSEMLEMGLTENEVRVRGKEILQLLSQARRISSNDYPKSIERISEDPRYKKTIRLLQEKVNSLTPEGLTPEIVASKRTLEELIKWVWKYDCSQDKRPELLIGWRKPIGEKLVDALK.

The 3'-5' exonuclease domain occupies 31–197 (RVVTDNTALL…PLYHILEKEL (167 aa)). The HRDC domain maps to 239-318 (NPLELSRLRV…SQARRISSND (80 aa)).

This sequence belongs to the RNase D family. A divalent metal cation serves as cofactor.

The protein localises to the cytoplasm. It carries out the reaction Exonucleolytic cleavage that removes extra residues from the 3'-terminus of tRNA to produce 5'-mononucleotides.. Functionally, exonuclease involved in the 3' processing of various precursor tRNAs. Initiates hydrolysis at the 3'-terminus of an RNA molecule and releases 5'-mononucleotides. In Haemophilus influenzae (strain ATCC 51907 / DSM 11121 / KW20 / Rd), this protein is Ribonuclease D.